A 634-amino-acid polypeptide reads, in one-letter code: TATA box-binding protein-associated factor RNA polymerase I subunit B (634 aa).

The RRN7-type zinc-finger motif lies at 19–51 (LVCEYCGHGSEYAEDDADDGFFTCRQCSAIHTS). Residues Cys21, Cys24, Cys42, and Cys45 each contribute to the Zn(2+) site. Residues 51–80 (STQNTATNPFDFPMTPAHLSAHRRPTQPTP) form a B-reader region. Positions 54–107 (NTATNPFDFPMTPAHLSAHRRPTQPTPTPKPFPAPRGAATGAAAPDFDDLGEPS) are disordered. Pro residues predominate over residues 77–87 (QPTPTPKPFPA). The segment at 81–83 (TPK) is B-linker. The N-terminal cyclin fold stretch occupies residues 84-281 (PFPAPRGAAT…DKLLGSSLND (198 aa)). The segment covering 88–98 (PRGAATGAAAP) has biased composition (low complexity). The segment at 282-284 (CPL) is C-terminal cyclin fold.

This sequence belongs to the RRN7/TAF1B family.

It is found in the nucleus. The protein localises to the nucleolus. Functionally, component of RNA polymerase I core factor complex that acts as a GTF2B/TFIIB-like factor and plays a key role in multiple steps during transcription initiation such as pre-initiation complex (PIC) assembly and postpolymerase recruitment events in polymerase I (Pol I) transcription. Binds rDNA promoters and plays a role in Pol I recruitment. The chain is TATA box-binding protein-associated factor RNA polymerase I subunit B from Oryza sativa subsp. japonica (Rice).